A 220-amino-acid chain; its full sequence is Ribosomal RNA small subunit methyltransferase G (220 aa).

Residues G82, L87, D105 to T107, V133 to E134, and R147 each bind S-adenosyl-L-methionine.

Belongs to the methyltransferase superfamily. RNA methyltransferase RsmG family.

Its subcellular location is the cytoplasm. In terms of biological role, specifically methylates the N7 position of a guanine in 16S rRNA. This chain is Ribosomal RNA small subunit methyltransferase G, found in Chlorobium limicola (strain DSM 245 / NBRC 103803 / 6330).